A 49-amino-acid polypeptide reads, in one-letter code: SPbeta prophage-derived uncharacterized protein YorN (49 aa).

This is SPbeta prophage-derived uncharacterized protein YorN (yorN) from Bacillus subtilis (strain 168).